Here is a 469-residue protein sequence, read N- to C-terminus: Keratin, type I cytoskeletal 26 (469 aa).

The head stretch occupies residues 1–82 (MSFRLSSGSR…ENEHGLLPGN (82 aa)). The coil 1A stretch occupies residues 83–118 (EKVTLQNLNDRLASYLDHVCTLEEANADLEQKIKGW). The 316-residue stretch at 83–398 (EKVTLQNLND…KLIDGEGRKS (316 aa)) folds into the IF rod domain. The segment at 119 to 140 (YEKYGPGSGRQLAYDCSKYFSV) is linker 1. The segment at 141–232 (TEDLKRQIIS…KNHQEEMKVM (92 aa)) is coil 1B. The linker 12 stretch occupies residues 233 to 255 (QGAAGGNVNVEINAAPGVDLTVL). The interval 256–394 (LNNMRAEYED…EMYCKLIDGE (139 aa)) is coil 2. The segment at 395-465 (GRKSKSTYCK…NITMEQRLPS (71 aa)) is tail. 2 disordered regions span residues 398 to 421 (SKST…KDSK) and 450 to 469 (KSSK…KVPQ). Basic and acidic residues predominate over residues 405 to 421 (SEGRGPKNSENQVKDSK).

The protein belongs to the intermediate filament family. As to quaternary structure, heterotetramer of two type I and two type II keratins.

This Bos taurus (Bovine) protein is Keratin, type I cytoskeletal 26.